Consider the following 180-residue polypeptide: Telokin-like protein 20 (180 aa).

A disordered region spans residues 112-180 (SKTDAAVHTS…KQKLDNAKQD (69 aa)). Residues 156–165 (DFEENIDDGD) are compositionally biased toward acidic residues.

The protein is Telokin-like protein 20 (TLP20) of Lepidoptera (butterflies and moths).